Consider the following 311-residue polypeptide: Ribosomal RNA small subunit methyltransferase H (311 aa).

S-adenosyl-L-methionine contacts are provided by residues 32-34 (AGH), D52, F79, D100, and Q107.

It belongs to the methyltransferase superfamily. RsmH family.

It is found in the cytoplasm. It carries out the reaction cytidine(1402) in 16S rRNA + S-adenosyl-L-methionine = N(4)-methylcytidine(1402) in 16S rRNA + S-adenosyl-L-homocysteine + H(+). In terms of biological role, specifically methylates the N4 position of cytidine in position 1402 (C1402) of 16S rRNA. In Staphylococcus haemolyticus (strain JCSC1435), this protein is Ribosomal RNA small subunit methyltransferase H.